The primary structure comprises 611 residues: Protein ral2 (611 aa).

Kelch repeat units follow at residues 43 to 91, 96 to 149, and 175 to 224; these read EAFV…HSGD, KLIF…EVNG, and YLII…VINK. At serine 604 the chain carries Phosphoserine.

Its function is as follows. Essential for mating and for recognition of the mating pheromone, and for the determination of cell shape. Implicated in activation of the ras1 protein. In Schizosaccharomyces pombe (strain 972 / ATCC 24843) (Fission yeast), this protein is Protein ral2 (ral2).